The sequence spans 137 residues: Secreted RxLR effector protein 67 (137 aa).

Positions 1-18 are cleaved as a signal peptide; it reads MRLYILVLAAIAVTLVFA. Positions 32-61 match the RxLR-dEER motif; that stretch reads RALRQASITDEKSDDSLNAQAPPLSKSEKR. A disordered region spans residues 40-65; sequence TDEKSDDSLNAQAPPLSKSEKRLSRS. The chain crosses the membrane as a helical span at residues 114–134; the sequence is WFVRMILEAGIFWAVFHCLSA.

Belongs to the RxLR effector family.

Its subcellular location is the secreted. It localises to the host cytoplasm. The protein localises to the host nucleus. The protein resides in the membrane. Functionally, effector that partially suppresses the tobacco programmed cell death induced by cell death-inducing proteins. This Plasmopara viticola (Downy mildew of grapevine) protein is Secreted RxLR effector protein 67.